The primary structure comprises 467 residues: 3-isopropylmalate dehydratase large subunit (467 aa).

Positions 348, 409, and 412 each coordinate [4Fe-4S] cluster. Residues 423–449 (NERSISTSNRNFEGRQGKGSRTHLASP) form a disordered region.

Belongs to the aconitase/IPM isomerase family. LeuC type 1 subfamily. As to quaternary structure, heterodimer of LeuC and LeuD. The cofactor is [4Fe-4S] cluster.

It carries out the reaction (2R,3S)-3-isopropylmalate = (2S)-2-isopropylmalate. The protein operates within amino-acid biosynthesis; L-leucine biosynthesis; L-leucine from 3-methyl-2-oxobutanoate: step 2/4. In terms of biological role, catalyzes the isomerization between 2-isopropylmalate and 3-isopropylmalate, via the formation of 2-isopropylmaleate. This chain is 3-isopropylmalate dehydratase large subunit, found in Bifidobacterium longum subsp. infantis (strain ATCC 15697 / DSM 20088 / JCM 1222 / NCTC 11817 / S12).